Reading from the N-terminus, the 155-residue chain is Small ribosomal subunit protein eS19 (155 aa).

Belongs to the eukaryotic ribosomal protein eS19 family. In terms of assembly, component of the small ribosomal subunit.

The protein localises to the cytoplasm. Functionally, component of the small ribosomal subunit. The ribosome is a large ribonucleoprotein complex responsible for the synthesis of proteins in the cell. Required for proper maturation of the small (40S) ribosomal subunit. This is Small ribosomal subunit protein eS19 (RPS19) from Entamoeba histolytica (strain ATCC 30459 / HM-1:IMSS / ABRM).